The primary structure comprises 1690 residues: MPMSSFKRKIKAIQIKIASPEVIRSWSGGEVKKPETINYRTFKPERDGLFCERIFGPVKDYECACGKYKGKKYEGTVCERCGVRVESREARRKRMGHIELAAPAVHIWYLESIPSVLGTLLNMSTSDLENIIYYGSRRVIERAFIVTDPKDTPFSQGDVIYETEYRIYRKKWDFDVEQAFVVKNPKSPVLSDIDGEVTLKTEKSITGREITWIIVKNITRATHTVLPGMILVVKDGQEVEKGQDLTKEMTIDPVYAPFDGHVEIDELSNTITLKPLTTSKDQPVVFTIPYGAKILVSNGQKVKKGDQITTSTSLPAVKASISGTVRFGSNLNIRALEDGNFEVLSTGEVYVEQVIEERKYPVFEGALVYVNNGDQVKKGDHLADRFLFEEEYLSATEYKIFESHYPTMFDVEERTENDRPIVVITDIDPEVSKETGLKVGDIVTENEYEAYLQIYPEKIVADAGAQAIKKLLQNLDLEALQAEIEAELKKLPSSSSKAIKLRRRLKMVKDFLKSGNKPEWMVLEVVPVIPPDLRPMIQIEGGRFATTDLNELYRRLINRNNRLKKLLELGAPEIILRNEKRMLQEAVDALIHNGSDSEGKRSRRAVLKDRNGRPLKSLTDLLKGKKGRFRRNLLGKRVDYSGRAVIVVGPNLKIHQCGIPKKMAMELFKPFVLAKLLGEGSSSKTMRKVKKAIIEKEMPEAWEVLEEVIKGSVVLLNRAPTLHRMSIQAFEPKLVEGNAIQLHPVVCPPFNADFDGDQMAVHVPLSAAAQAEARFLMLSRYNIISPAHGKPISLPTQDIIIGSYYLTTVGKEFDSLKEEDVKWKFSSPEEAMLAYHLGFIKLHTPILIKVAVNGEEKRIKTTLGRVIFNGILPEDLRDYNRIFDKKQINALVYETFKRHGIDRAADLLDDIKDIGFHYATVSGLTLSLKDLKIPPERDEILRKTWEKVRIIEENYEKGFLTEEQRKSEIIRLWMSVTEEITKLTSKTLAEDPFNPIYMMVNSGARGNIDQVKQLAGIRGLMIKAYDPRSREIKSKIFKGQAIHEALTFDYPVDKNLREGVDILQFFISTYGARKGQVDTAMNTSFAGYLTRRLVDVAQSVTVAEPDCGTHEGIRAMDLIKEGTVVEKMNEFLFGRVLARDVLDPETKEVLKNPETGKEYTRNTMLTDDDANFLASYKKMVDVVRYEEIDITELSLPNMYAEIAEPVGEYEEGTELTWDVIKAAKNEGKYRIKVKVYPVVGTVYAEEEPLYDKKGERQLLVYQEVINEIVAKMLEENGIEKVSVRPDIIVRSPLTCESEYGVCAACYGMDLSNHKIVNVGEAVGVVAAQSIGEPGTQLTMRTFHVGGVMGASDIVSGLTTVEKTFEPYAFLREEKSGGKKEIRKYYGSEAILCEVDGFVKDIATDESGRTVIYIEDYAGNIHAYKVPKRAKVRVEKGQKVLRGETLTSGAIVWWKLLELESEKGVMTAMNLLKIIKNAYVQQGVSIHDKHFEIIFKQMLSMATIVDPGDSDYLPDQLVPLVDIKRFNREILEGNAKVEENRKWVIGKTLAKRIITETEEGELVELAQKGDEVTEELLKKIIEAGIKEIDVFEKDKVVTYQILPKEPIKYKRRLLSLKKAALNYPGWLSAAAFEETAWVLTAAAIEGKVDPLIGLKENVIVGQLIPAGTGLDVFAGIQVEETPRAAVEEELA.

Residues cysteine 63, cysteine 65, cysteine 78, and cysteine 81 each contribute to the Zn(2+) site. Mg(2+) contacts are provided by aspartate 753, aspartate 755, and aspartate 757. Zn(2+) contacts are provided by cysteine 1107, cysteine 1295, cysteine 1302, and cysteine 1305.

The protein belongs to the RNA polymerase beta' chain family. The RNAP catalytic core consists of 2 alpha, 1 beta, 1 beta' and 1 omega subunit. When a sigma factor is associated with the core the holoenzyme is formed, which can initiate transcription. It depends on Mg(2+) as a cofactor. The cofactor is Zn(2+).

The enzyme catalyses RNA(n) + a ribonucleoside 5'-triphosphate = RNA(n+1) + diphosphate. Functionally, DNA-dependent RNA polymerase catalyzes the transcription of DNA into RNA using the four ribonucleoside triphosphates as substrates. The sequence is that of DNA-directed RNA polymerase subunit beta' from Thermotoga maritima (strain ATCC 43589 / DSM 3109 / JCM 10099 / NBRC 100826 / MSB8).